We begin with the raw amino-acid sequence, 374 residues long: DNA replication and repair protein RecF (374 aa).

30–37 (GPNAQGKT) provides a ligand contact to ATP.

Belongs to the RecF family.

It localises to the cytoplasm. The RecF protein is involved in DNA metabolism; it is required for DNA replication and normal SOS inducibility. RecF binds preferentially to single-stranded, linear DNA. It also seems to bind ATP. The chain is DNA replication and repair protein RecF from Lactobacillus johnsonii (strain CNCM I-12250 / La1 / NCC 533).